We begin with the raw amino-acid sequence, 295 residues long: Acetylglutamate kinase (295 aa).

Residues glycine 66–glycine 67, arginine 88, and asparagine 193 each bind substrate.

The protein belongs to the acetylglutamate kinase family. ArgB subfamily.

Its subcellular location is the cytoplasm. The enzyme catalyses N-acetyl-L-glutamate + ATP = N-acetyl-L-glutamyl 5-phosphate + ADP. It participates in amino-acid biosynthesis; L-arginine biosynthesis; N(2)-acetyl-L-ornithine from L-glutamate: step 2/4. Functionally, catalyzes the ATP-dependent phosphorylation of N-acetyl-L-glutamate. In Gluconobacter oxydans (strain 621H) (Gluconobacter suboxydans), this protein is Acetylglutamate kinase.